We begin with the raw amino-acid sequence, 599 residues long: Elongation factor 4 (599 aa).

Residues 4-186 (ENIRNFSIIA…EIVTKIPPPQ (183 aa)) enclose the tr-type G domain. GTP-binding positions include 16–21 (DHGKST) and 133–136 (NKID).

The protein belongs to the TRAFAC class translation factor GTPase superfamily. Classic translation factor GTPase family. LepA subfamily.

Its subcellular location is the cell inner membrane. It carries out the reaction GTP + H2O = GDP + phosphate + H(+). In terms of biological role, required for accurate and efficient protein synthesis under certain stress conditions. May act as a fidelity factor of the translation reaction, by catalyzing a one-codon backward translocation of tRNAs on improperly translocated ribosomes. Back-translocation proceeds from a post-translocation (POST) complex to a pre-translocation (PRE) complex, thus giving elongation factor G a second chance to translocate the tRNAs correctly. Binds to ribosomes in a GTP-dependent manner. This is Elongation factor 4 from Geotalea uraniireducens (strain Rf4) (Geobacter uraniireducens).